An 85-amino-acid chain; its full sequence is Protein MC005 (85 aa).

As to quaternary structure, interacts with host IKBKG; this interaction prevents NF-kappa-B activation.

It is found in the host cytoplasm. Plays a role in the inhibition of the host NF-kappa-B pathway by preventing ubiquitin binding-dependent regulation of host IKBKB activation by IKBKG/NEMO. This chain is Protein MC005 (MC005L), found in Molluscum contagiosum virus subtype 1 (MOCV).